Here is a 99-residue protein sequence, read N- to C-terminus: Cell division protein FtsB (99 aa).

At 1–3 (MKF) the chain is on the cytoplasmic side. A helical membrane pass occupies residues 4 to 21 (FVIALIVLLGLLQYRLWS). The Periplasmic portion of the chain corresponds to 22–99 (GDNSLPEYFV…GDRSVSSPSQ (78 aa)). The stretch at 31–73 (VLQKQIAAQQDGNAKLNERNQVLKEEIIDLKSGTEAIEERARN) forms a coiled coil.

Belongs to the FtsB family. In terms of assembly, part of a complex composed of FtsB, FtsL and FtsQ.

The protein resides in the cell inner membrane. Its function is as follows. Essential cell division protein. May link together the upstream cell division proteins, which are predominantly cytoplasmic, with the downstream cell division proteins, which are predominantly periplasmic. This chain is Cell division protein FtsB, found in Shewanella sp. (strain MR-4).